We begin with the raw amino-acid sequence, 416 residues long: Squamosa promoter-binding-like protein 8 (416 aa).

Residues 11–53 form a disordered region; it reads SSCDDFGYNATPPPPPSLLPIMDQDGGGGSIQRDHHHHHNHQQ. The SBP-type zinc finger occupies 182-260; sequence PPRCQAEGCK…ADHNRRRRKS (79 aa). Residues Cys185, Cys190, Cys207, His210, Cys227, Cys230, His234, and Cys246 each coordinate Zn(2+). A Bipartite nuclear localization signal motif is present at residues 243-259; the sequence is KKSCRKRLADHNRRRRK. The disordered stretch occupies residues 250–299; sequence LADHNRRRRKSKPSDGEHSGEKRRAQANKSAATKDKAGSSSKNAGIGDGF. Residues 261–273 show a composition bias toward basic and acidic residues; the sequence is KPSDGEHSGEKRR.

In terms of tissue distribution, expressed in stems, leaf sheaths, and young panicles.

It is found in the nucleus. Probable transcription factor that plays an important role in building the laminar joint between leaf blade and leaf sheath boundary, thereby controlling ligule and auricle development. In Oryza sativa subsp. indica (Rice), this protein is Squamosa promoter-binding-like protein 8 (SPL8).